A 1341-amino-acid polypeptide reads, in one-letter code: MAYSYSEKKRIRKDFGKRPQVLDIPFLLSTQLKSFKKFLVPDADGDHGLEAAFRSVFPIKSYSGNSELQYVSYRIGEPVFDVKECQIRGVTYSAPLRVKLRLVVMDKEAPGTVKDIKEQEVYMGEIPLMTDTGTFVINGTERVIVSQLHRSPGVFFDNDRGKTHSSGKVLYNARVIPYRGSWLDFEFDAKDNLYVRIDRRRKLPASIILRALEYSSEDILGIFFDNTTFEVTDGKVLMELVPSRLRGETAAFDIKSEDGEVFVESGRRVTARHIKNIEKKGIKQLEVPHEYIIGRVLAKNYVDESTGEVVANANDELTLELMAELVKAGHTKIDTLYINEVDSGAYMSNTLNIDSSSSRLEALVEIYRMMRPGEPPTKDAAEALFQNLFFSEERYDLSTVGRMKFNSRVGYDTDTGPGTLSKEDIVSVMKVLIAIRNGVGDVDDIDHLGNRRIRSVGEMAENQFRVGLVRVERAVRERLSLGDLDAIMPQDLINAKPISAAVKEFFGSSQLSQFMDQNNPLSEVTHKRRISALGPGGLTRERAGFEVRDVHVTHYGRVCPIETPEGPNIGLINSLSTYARTNDYGFLETPYRKVVDGVVTDEVDYLSAIEEGQFVIAQANSNLTETNEFVDELIPCRHKGESTFMGRMDQQYMDVSPQQVISVAAALIPFLEHDDANRALMGSNMQRQAVPTLKADKPLVGTGIELTLAKDSGVTIVAKRGGEVMYCDASRIVVNVHEEERVPGEAGIDIYNLTKYTRSNQNTCINQKPTCMVGEPVTRGDVLADGPSTDLGDLALGQNLRVAFMPWNGYNFEDSILLSERVVEEDRLTTIHIQELQCIARDTKLGSEEITADIPNVGESALGKLDESGVVYIGAEVKSGDILVGKVTPKGETQLTPEEKLLRAIFGEKASDVKDSSLRVPNSVTGTVIDVQVFTRDGVEKDKRALEVEEMQLRDAKKDFNEEFRILEAGVLDRARKLLIAAGFDEDKLALLNAEKLLTQSLAEEDKQAELEQLAAQYDELKAEYDKKFENKRRKITQGDDLAPGVLKIVKVYLAVKRCIQPGDKMAGRHGNKGVISTIVPVEDMPYDDKGRTVDIVLNPLGVPSRMNIGQILETHMGLAARGIGERIEEMMKEQRELHELRAFIKQAYEIGESRQVVDIDSFTDDEIRRLAENLKGGLPIATPAFDGAKENEIKDMLELAGYPRSGQVTLYDGRTGDQFERQVTVGYMYMLKLNHLVDDKMHARSTGSYSLVTQQPLGGKAQFGGQRFGEMEVWALEAYGAAYTLQEMLTVKSDDVNGRTKMYKNIVDGNHKMEPGMPESFNVLLKEIRSLGINIELEEN.

It belongs to the RNA polymerase beta chain family. In terms of assembly, the RNAP catalytic core consists of 2 alpha, 1 beta, 1 beta' and 1 omega subunit. When a sigma factor is associated with the core the holoenzyme is formed, which can initiate transcription.

It catalyses the reaction RNA(n) + a ribonucleoside 5'-triphosphate = RNA(n+1) + diphosphate. In terms of biological role, DNA-dependent RNA polymerase catalyzes the transcription of DNA into RNA using the four ribonucleoside triphosphates as substrates. The protein is DNA-directed RNA polymerase subunit beta of Pseudoalteromonas translucida (strain TAC 125).